A 107-amino-acid polypeptide reads, in one-letter code: Nucleoid-associated protein Pnec_0645 (107 aa).

This sequence belongs to the YbaB/EbfC family. In terms of assembly, homodimer.

It localises to the cytoplasm. The protein resides in the nucleoid. In terms of biological role, binds to DNA and alters its conformation. May be involved in regulation of gene expression, nucleoid organization and DNA protection. The sequence is that of Nucleoid-associated protein Pnec_0645 from Polynucleobacter necessarius subsp. necessarius (strain STIR1).